A 636-amino-acid chain; its full sequence is Translation factor GUF1 homolog, chloroplastic (636 aa).

The region spanning 31 to 212 is the tr-type G domain; that stretch reads NLARNFSIIA…AIVTKIPPPQ (182 aa). GTP-binding positions include 40–47, 105–109, and 159–162; these read AHIDHGKS, DTPGH, and NKID.

This sequence belongs to the TRAFAC class translation factor GTPase superfamily. Classic translation factor GTPase family. LepA subfamily.

It localises to the plastid. The protein localises to the chloroplast. It carries out the reaction GTP + H2O = GDP + phosphate + H(+). In terms of biological role, promotes chloroplast protein synthesis. May act as a fidelity factor of the translation reaction, by catalyzing a one-codon backward translocation of tRNAs on improperly translocated ribosomes. The chain is Translation factor GUF1 homolog, chloroplastic from Oryza sativa subsp. indica (Rice).